Consider the following 491-residue polypeptide: Aspartyl/glutamyl-tRNA(Asn/Gln) amidotransferase subunit B (491 aa).

It belongs to the GatB/GatE family. GatB subfamily. In terms of assembly, heterotrimer of A, B and C subunits.

It carries out the reaction L-glutamyl-tRNA(Gln) + L-glutamine + ATP + H2O = L-glutaminyl-tRNA(Gln) + L-glutamate + ADP + phosphate + H(+). The enzyme catalyses L-aspartyl-tRNA(Asn) + L-glutamine + ATP + H2O = L-asparaginyl-tRNA(Asn) + L-glutamate + ADP + phosphate + 2 H(+). Functionally, allows the formation of correctly charged Asn-tRNA(Asn) or Gln-tRNA(Gln) through the transamidation of misacylated Asp-tRNA(Asn) or Glu-tRNA(Gln) in organisms which lack either or both of asparaginyl-tRNA or glutaminyl-tRNA synthetases. The reaction takes place in the presence of glutamine and ATP through an activated phospho-Asp-tRNA(Asn) or phospho-Glu-tRNA(Gln). In Prochlorococcus marinus (strain NATL2A), this protein is Aspartyl/glutamyl-tRNA(Asn/Gln) amidotransferase subunit B.